The sequence spans 1190 residues: MGEEGPPSLEYIQAKDLFPPKELVKEEENLQVPFTVLQGEGVEFLGRATDALIAISNYRLHIKFKDSVINVPLRMIDSVESRDMFQLHIACKDSKVVRCHFSTFKQCQEWLSRLSRATARPAKPEDLFAFAYHAWCLGLTEEDQHTHLCQPGEHIRCRQEAELARMGFDLQNVWRVSHINSNYKLCPSYPQKLLVPVWITDKELENVASFRSWKRIPVVVYRHLRNGAAIARCSQPEISWWGWRNADDEYLVTSIAKACALDPGTRASGGSLSTGTNDASEACDTDFDSSLTACSGVESTAAPQKLLILDARSYTAAVANRAKGGGCECEEYYPNCEVLFMGMANIHAIRNSFQYLRAVCSQMPDPSNWLSALESTKWLQHLSVMLKAAVLVANTVDREGRPVLVHCSDGWDRTPQIVALAKILLDPYYRTLEGFQVLVESDWLDFGHKFGDRCGHQENAEDQNEQCPVFLQWLDSVHQLLKQFPCLFEFNEAFLVKLVQHTYSCLYGTFLANNPCEREKRNIYKRTCSVWALLRAGNKNFHNFLYTPGSDVVLHPVCHVRALHLWTAVYLPASSPCTLGEENMDLYLSPVAQSQEFSGRSLDRLPKTRSMDDLLSACDTSSPLTRTSSDPNLNNHSQEVRGSLEPWHSSPEGAETVIDSGVGSPQLTVGEMGLPPPLPSSQKEYLSNKPFKGHKSCSLSYKLLNTSVSWEMKSNTSDIKVLEETEALAPDPSAQEEQGRTSDGLGKPPEQFLEKEAVSSLCSVSSKCGGACDFPEPPQDPLTGTPQQPHLDSMQISPSRCTPDHSQGSLCNPPSVASQTPEPNTDLLSQDPPGSTASISHQEQPSSVPDLIYKKEDAGKRGSKNGQLLENPRFGKMPLELARKPISQSQISEFSFLGSNWDSFQGMMTSFPSGETTPRRLLAYGCCSKRPSNKHIRAAGPCLGGQWAQREGMKSPVCSSHSNGHCTGPGGKNNRMWFSSHPKQVSSTKPSLLSCPSPVPPLYLDDDGLPFPTDVIQHRLRQIEAGYRQEVEQLRRQVRELQMRLDIRHCCAPPAEPPMDYEDDFTCLKESDGSDTEDFGSDHSEDCLSEASWEPVDKKETEVTRWVPDHMASHCFNCDCEFWLAKRRHHCRNCGNVFCAGCCHLKLPIPDQQLYDPVLVCNSCYEHIQVSRARELMSQHLKKPIATASS.

The residue at position 8 (S8) is a Phosphoserine. In terms of domain architecture, Myotubularin phosphatase spans 153-570; that stretch reads EHIRCRQEAE…RALHLWTAVY (418 aa). A 1,2-diacyl-sn-glycero-3-phospho-(1D-myo-inositol-3,5-bisphosphate) is bound by residues N320, N345, and I346. Residues N320, N345, and I346 each contribute to the a 1,2-diacyl-sn-glycero-3-phospho-(1D-myo-inositol-3-phosphate) site. C407 functions as the Phosphocysteine intermediate in the catalytic mechanism. The a 1,2-diacyl-sn-glycero-3-phospho-(1D-myo-inositol-3,5-bisphosphate) site is built by S408, D409, G410, W411, D412, R413, K449, and R453. The a 1,2-diacyl-sn-glycero-3-phospho-(1D-myo-inositol-3-phosphate) site is built by S408, D409, G410, W411, D412, and R413. R453 is an a 1,2-diacyl-sn-glycero-3-phospho-(1D-myo-inositol-3-phosphate) binding site. S610 and S629 each carry phosphoserine. Disordered stretches follow at residues 616–694, 724–749, and 773–848; these read SACD…FKGH, ETEA…GKPP, and DFPE…PSSV. The segment covering 618 to 637 has biased composition (polar residues); sequence CDTSSPLTRTSSDPNLNNHS. Over residues 782 to 847 the composition is skewed to polar residues; that stretch reads LTGTPQQPHL…SISHQEQPSS (66 aa). The PY-motif; substrate motif for NEDD4 motif lies at 999-1003; sequence VPPLY. Positions 1020 to 1052 form a coiled coil; the sequence is LRQIEAGYRQEVEQLRRQVRELQMRLDIRHCCA. The FYVE-type zinc-finger motif lies at 1109-1169; that stretch reads DHMASHCFNC…VCNSCYEHIQ (61 aa). 8 residues coordinate Zn(2+): C1115, C1118, C1131, C1134, C1139, C1142, C1161, and C1164.

It belongs to the protein-tyrosine phosphatase family. Non-receptor class myotubularin subfamily. As to quaternary structure, homooligomeric. Forms MTMR3:MTMR4 heterooligomers; regulates the localization of both proteins. The MTMR3:MTMR4 heterooligomer can also recruit both CEP55 and PLK1; occurs during early mitosis, regulates the phosphorylation of CEP55 by PLK1 and its recruitment to the midbody where it can mediate cell abscission. Interacts with SMAD2 and SMAD3; negatively regulates TGF-beta signaling through SMAD2 and SMAD3 dephosphorylation and retention in endosomes. Interacts with SMAD1; negatively regulates BMP signaling through SMAD1 dephosphorylation and retention in endosomes. In terms of processing, ubiquitinated. Ubiquitination by NEDD4 probably leads to proteasomal degradation. Phosphorylated by CDK1 during mitosis.

Its subcellular location is the early endosome membrane. It localises to the recycling endosome membrane. The protein resides in the late endosome membrane. The protein localises to the cytoplasmic vesicle. It is found in the phagosome membrane. It carries out the reaction a 1,2-diacyl-sn-glycero-3-phospho-(1D-myo-inositol-3-phosphate) + H2O = a 1,2-diacyl-sn-glycero-3-phospho-(1D-myo-inositol) + phosphate. It catalyses the reaction a 1,2-diacyl-sn-glycero-3-phospho-(1D-myo-inositol-3,5-bisphosphate) + H2O = a 1,2-diacyl-sn-glycero-3-phospho-(1D-myo-inositol-5-phosphate) + phosphate. The catalysed reaction is 1,2-dioctanoyl-sn-glycero-3-phospho-(1-D-myo-inositol-3-phosphate) + H2O = 1,2-dioctanoyl-sn-glycero-3-phospho-(1D-myo-inositol) + phosphate. The enzyme catalyses 1,2-dioctanoyl-sn-glycero-3-phospho-(1D-myo-inositol-3,5-bisphosphate) + H2O = 1,2-dioctanoyl-sn-glycero-3-phospho-(1D-myo-inositol-5-phosphate) + phosphate. Functionally, lipid phosphatase that specifically dephosphorylates the D-3 position of phosphatidylinositol 3-phosphate and phosphatidylinositol 3,5-bisphosphate, generating phosphatidylinositol and phosphatidylinositol 5-phosphate. Decreases the levels of phosphatidylinositol 3-phosphate, a phospholipid found in cell membranes where it acts as key regulator of both cell signaling and intracellular membrane traffic, in a subset of endosomal membranes to negatively regulate both endocytic recycling and trafficking and/or maturation of endosomes toward lysosomes. Through phosphatidylinositol 3-phosphate turnover in phagosome membranes regulates phagocytosis and phagosome maturation. By decreasing phosphatidylinositol 3-monophosphate (PI3P) levels in immune cells it can also regulate the innate immune response. Beside its lipid phosphatase activity, can also function as a molecular adapter to regulate midbody abscission during mitotic cytokinesis. Can also negatively regulate TGF-beta and BMP signaling through Smad proteins dephosphorylation and retention in endosomes. This is Phosphatidylinositol-3,5-bisphosphate 3-phosphatase MTMR4 from Mus musculus (Mouse).